Here is a 926-residue protein sequence, read N- to C-terminus: Isoleucine--tRNA ligase (926 aa).

The disordered stretch occupies residues 1–21; sequence MKMKETLQLGKTAFPMRGNLP. The 'HIGH' region motif lies at 57–67; that stretch reads PYANGNIHLGH. E552 lines the L-isoleucyl-5'-AMP pocket. Positions 593–597 match the 'KMSKS' region motif; sequence KMSKS. K596 contributes to the ATP binding site. Residues C886, C889, C906, and C909 each coordinate Zn(2+).

The protein belongs to the class-I aminoacyl-tRNA synthetase family. IleS type 1 subfamily. As to quaternary structure, monomer. The cofactor is Zn(2+).

It localises to the cytoplasm. It catalyses the reaction tRNA(Ile) + L-isoleucine + ATP = L-isoleucyl-tRNA(Ile) + AMP + diphosphate. Functionally, catalyzes the attachment of isoleucine to tRNA(Ile). As IleRS can inadvertently accommodate and process structurally similar amino acids such as valine, to avoid such errors it has two additional distinct tRNA(Ile)-dependent editing activities. One activity is designated as 'pretransfer' editing and involves the hydrolysis of activated Val-AMP. The other activity is designated 'posttransfer' editing and involves deacylation of mischarged Val-tRNA(Ile). The protein is Isoleucine--tRNA ligase of Enterococcus faecalis (strain ATCC 700802 / V583).